Consider the following 967-residue polypeptide: RNA polymerase-associated protein RapA (967 aa).

A Helicase ATP-binding domain is found at Glu163 to Asp337. Residue Asp176–Thr183 coordinates ATP. The DEAH box motif lies at Asp283 to His286. The Helicase C-terminal domain maps to Arg489–Glu660.

The protein belongs to the SNF2/RAD54 helicase family. RapA subfamily. As to quaternary structure, interacts with the RNAP. Has a higher affinity for the core RNAP than for the holoenzyme. Its ATPase activity is stimulated by binding to RNAP.

Functionally, transcription regulator that activates transcription by stimulating RNA polymerase (RNAP) recycling in case of stress conditions such as supercoiled DNA or high salt concentrations. Probably acts by releasing the RNAP, when it is trapped or immobilized on tightly supercoiled DNA. Does not activate transcription on linear DNA. Probably not involved in DNA repair. The chain is RNA polymerase-associated protein RapA from Pasteurella multocida (strain Pm70).